Reading from the N-terminus, the 528-residue chain is GTPase Der (528 aa).

2 stretches are compositionally biased toward acidic residues: residues 1 to 12 and 30 to 62; these read MDVEGAFADEEE and GYDD…PDFG. A disordered region spans residues 1–62; that stretch reads MDVEGAFADE…EDDFAAPDFG (62 aa). 2 EngA-type G domains span residues 90 to 253 and 263 to 436; these read CTVA…PEEP and RRVA…ENWD. Residues 96–103, 143–147, 205–208, 269–276, 316–320, and 381–384 each bind GTP; these read GRPNVGKS, DTGGW, NKFD, GKPNVGKS, DTAGL, and NKWD. The KH-like domain maps to 437-519; that stretch reads RRVSTGQLNN…PIRIAVRVRE (83 aa).

Belongs to the TRAFAC class TrmE-Era-EngA-EngB-Septin-like GTPase superfamily. EngA (Der) GTPase family. Associates with the 50S ribosomal subunit.

Functionally, GTPase that plays an essential role in the late steps of ribosome biogenesis. The polypeptide is GTPase Der (Corynebacterium efficiens (strain DSM 44549 / YS-314 / AJ 12310 / JCM 11189 / NBRC 100395)).